A 1183-amino-acid chain; its full sequence is Rab11 family-interacting protein 3 (1183 aa).

Residues 423 to 448 (AEDPSTESLPRKNGQEESKSALPVST) form a disordered region. Basic and acidic residues predominate over residues 431 to 441 (LPRKNGQEESK). EF-hand domains are found at residues 706 to 741 (EEQS…YGAE) and 738 to 773 (YGAE…ISNE). Residues aspartate 719, aspartate 721, aspartate 723, glutamate 730, aspartate 751, serine 753, and aspartate 762 each contribute to the Ca(2+) site. Residues 902–1121 (ELEKDSLESE…NGQIINLSIQ (220 aa)) are a coiled coil. Residues 911-1015 (EEQHARLRQE…LQDEADDITQ (105 aa)) form an ARF-binding domain (ABD) region. Residues 1005 to 1044 (KLQDEADDITQRLNEESESRRKMSDKLSHERHTNQKEKEC) form a disordered region. The region spanning 1121 to 1183 (QGAKSLFTES…ESNPSILEVK (63 aa)) is the FIP-RBD domain.

Its subcellular location is the recycling endosome membrane. The protein localises to the cytoplasm. It is found in the cytoskeleton. The protein resides in the microtubule organizing center. It localises to the centrosome. Its subcellular location is the cleavage furrow. The protein localises to the midbody. It is found in the golgi apparatus membrane. The protein resides in the golgi apparatus. It localises to the trans-Golgi network membrane. Functionally, downstream effector molecule for Rab11 GTPase which acts as a regulator of endocytic trafficking, cytokinesis and intracellular ciliogenesis by participating in membrane delivery. This is Rab11 family-interacting protein 3 (rab11fip3) from Danio rerio (Zebrafish).